A 1024-amino-acid polypeptide reads, in one-letter code: Hemolysin, plasmid (1024 aa).

Polar residues predominate over residues alanine 20–lysine 32. Positions alanine 20–alanine 39 are disordered. A run of 3 helical transmembrane segments spans residues isoleucine 238–asparagine 260, lysine 268–alanine 327, and aspartate 365–glutamate 411. 2 N6-myristoyl lysine lipidation sites follow: lysine 564 and lysine 690. Hemolysin-type calcium-binding repeat units follow at residues phenylalanine 732–isoleucine 749, glutamate 750–leucine 767, serine 768–leucine 785, isoleucine 786–phenylalanine 803, phenylalanine 816–leucine 833, and aspartate 834–tyrosine 851.

It belongs to the RTX prokaryotic toxin (TC 1.C.11) family. In terms of processing, myristoylated by HlyC; the toxin only becomes active when modified. Mainly myristoylated, while a minor fraction is acylated with pentadecanoyl (C15:0; 26%) and heptadecanoyl (C17:0; 6%) fatty acyl groups. Fatty acylation is involved in binding to host membranes and promotes the irreversible insertion of Hemolysin into the host cell membrane. Can be activated by both myristoylation and palmitoylation, but HlyC catalyzes lysine myristoylation.

The protein resides in the secreted. Its subcellular location is the host cell membrane. Its function is as follows. Bacterial hemolysins are exotoxins that attack blood cell membranes and cause cell rupture by forming a pore. This Escherichia coli protein is Hemolysin, plasmid.